Reading from the N-terminus, the 390-residue chain is Formamidopyrimidine-DNA glycosylase (390 aa).

Catalysis depends on proline 2, which acts as the Schiff-base intermediate with DNA. The Proton donor role is filled by glutamate 3. Lysine 60 (proton donor; for beta-elimination activity) is an active-site residue. DNA contacts are provided by tyrosine 107, arginine 126, lysine 167, and asparagine 186. Positions 283–390 (AEKAAKVRPA…AGKKPKGRKS (108 aa)) are disordered. Acidic residues predominate over residues 301 to 316 (DDGDGEEDEQETEKED). Residues 321–337 (SKKGQKPRGGRGKKPAS) are compositionally biased toward basic residues. The segment covering 343–355 (ESDDDGDDSEAEE) has biased composition (acidic residues). The segment covering 360–370 (PKGRGTKPAIK) has biased composition (basic residues).

Belongs to the FPG family. Monomer. In terms of tissue distribution, expressed in leaves (at protein levels).

The protein localises to the nucleus. The enzyme catalyses Hydrolysis of DNA containing ring-opened 7-methylguanine residues, releasing 2,6-diamino-4-hydroxy-5-(N-methyl)formamidopyrimidine.. The catalysed reaction is 2'-deoxyribonucleotide-(2'-deoxyribose 5'-phosphate)-2'-deoxyribonucleotide-DNA = a 3'-end 2'-deoxyribonucleotide-(2,3-dehydro-2,3-deoxyribose 5'-phosphate)-DNA + a 5'-end 5'-phospho-2'-deoxyribonucleoside-DNA + H(+). Its function is as follows. Involved in base excision repair of DNA damaged by oxidation or by mutagenic agents. Acts as a DNA glycosylase that recognizes and removes damaged bases. Can process efficiently 4,6-diamino-5-formamidopyrimidine (FapyA), 2,6-diamino-4- hydroxy-5-formamidopyrimidine (FapyG) and the further oxidation products of 8-oxoguanine (8-oxoG), such as guanidinohydantoin and spiroiminodihydantoin. Has marginal activity towards 8-oxoG. Has AP (apurinic/apyrimidinic) lyase activity. Cleaves the DNA backbone by beta-delta elimination to generate a single-strand break at the site of the removed base with both 3'- and 5'-phosphates. The sequence is that of Formamidopyrimidine-DNA glycosylase (FPG1) from Arabidopsis thaliana (Mouse-ear cress).